A 489-amino-acid chain; its full sequence is Homoserine O-acetyltransferase (489 aa).

Residues 63-435 (NALVICHALS…SPEGHDAFLL (373 aa)) form the AB hydrolase-1 domain. Ser-162 is an active-site residue. The active-site Nucleophile is the Ser-162. The tract at residues 247–272 (RFGRNVPDPSKRQNINGTERLPTPPN) is disordered. Catalysis depends on residues Asp-401 and His-430.

This sequence belongs to the AB hydrolase superfamily. MetX family.

The catalysed reaction is L-homoserine + acetyl-CoA = O-acetyl-L-homoserine + CoA. The protein operates within amino-acid biosynthesis; L-methionine biosynthesis via de novo pathway; O-acetyl-L-homoserine from L-homoserine: step 1/1. Functionally, commits homoserine to the methionine biosynthesis pathway by catalyzing its O-acetylation. In Emericella nidulans (strain FGSC A4 / ATCC 38163 / CBS 112.46 / NRRL 194 / M139) (Aspergillus nidulans), this protein is Homoserine O-acetyltransferase (metE).